Consider the following 506-residue polypeptide: DNA polymerase type-X family protein pol4 (506 aa).

Residues 1 to 98 (MKILASSTNY…TPGNPYVIWH (98 aa)) enclose the BRCT domain. The interval 106–150 (GSPYTPSTRPASHTEAPNDFENHETPNTENNNEVKSIDNVDQEGS) is disordered. The interval 348–357 (RGKPVGADVD) is involved in ssDNA binding. Mg(2+) contacts are provided by Asp355, Asp357, and Asp419.

Belongs to the DNA polymerase type-X family. Mg(2+) serves as cofactor.

The protein resides in the cytoplasm. Its subcellular location is the nucleus. It carries out the reaction DNA(n) + a 2'-deoxyribonucleoside 5'-triphosphate = DNA(n+1) + diphosphate. In terms of biological role, repair polymerase. Involved in gap-filling in DNA non-homologous end joining (NHEJ) required for double-strand break repair. Can incorporate a ribonucleotide (rNTP) into a primer DNA. This is DNA polymerase type-X family protein pol4 (pol4) from Schizosaccharomyces pombe (strain 972 / ATCC 24843) (Fission yeast).